Reading from the N-terminus, the 509-residue chain is Zinc finger protein Aiolos (509 aa).

The interval 1–85 (MEDIKPNVEL…PMGNAEEPEI (85 aa)) is disordered. Polar residues predominate over residues 10–20 (LKSTQEQSVPT). Position 20 is a phosphothreonine (threonine 20). The span at 56–72 (DSMKVKDEYSERDENVL) shows a compositional bias: basic and acidic residues. Glycyl lysine isopeptide (Lys-Gly) (interchain with G-Cter in SUMO2) cross-links involve residues lysine 61, lysine 73, and lysine 100. C2H2-type zinc fingers lie at residues 118 to 140 (MNCD…KRSH), 146 to 168 (FQCN…IKLH), and 174 to 196 (FKCH…LRTH). The C2H2-type 4; atypical zinc-finger motif lies at 202–224 (YKCEFCGRSYKQRSSLEEHKERC). Residue lysine 245 forms a Glycyl lysine isopeptide (Lys-Gly) (interchain with G-Cter in SUMO2) linkage. The residue at position 326 (threonine 326) is a Phosphothreonine. The interval 365–421 (HLPEKSLPSERGLSPTNSGHDSTDTDSNHEERQNHIYQQNPMVPPRARNGMPLLKEG) is disordered. Position 378 is a phosphoserine (serine 378). A compositionally biased stretch (basic and acidic residues) spans 385-398 (DSTDTDSNHEERQN). The C2H2-type 5 zinc finger occupies 452–474 (YRCDHCRVLFLDYVMFTIHMGCH). The segment at 452–504 (YRCDHCRVLFLDYVMFTIHMGCHGFRDPFECNMCGYRSHDRYEFSSHIARGEH) is mediates homodimerization and heterodimerization. Residues 480 to 504 (FECNMCGYRSHDRYEFSSHIARGEH) form a C2H2-type 6; atypical zinc finger.

Belongs to the Ikaros C2H2-type zinc-finger protein family. Homodimer. Heterodimer with other IKAROS family members. Interacts with IKZF4 and IKZF5. Interacts with IKZF1. Interacts with HRAS. Interacts with FOXP3; this interaction may be required for silencing target genes and regulating the suppressive activity of FOXP3-positive regulatory T-cells (Treg). Interacts with BCL21L; this interaction blocks the anti-apoptotic role of BCL21L. Associates with histone deacetylase complexes containing HDAC1, MTA2 and SIN3A.

Its subcellular location is the nucleus. It is found in the cytoplasm. In terms of biological role, transcription factor that plays an important role in the regulation of lymphocyte differentiation. Plays an essential role in regulation of B-cell differentiation, proliferation and maturation to an effector state. Involved in regulating BCL2 expression and controlling apoptosis in T-cells in an IL2-dependent manner. The protein is Zinc finger protein Aiolos (IKZF3) of Bos taurus (Bovine).